The chain runs to 231 residues: Endo-1,4-beta-xylanase 4 (231 aa).

A signal peptide spans 1–18 (MVSFTTILVAATAALVAA). The GH11 domain maps to 42–230 (GGTPSSTGTH…SSGSSTVTIQ (189 aa)). Asparagine 99 carries N-linked (GlcNAc...) asparagine glycosylation. Residue glutamate 126 is the Nucleophile of the active site. Residue glutamate 217 is the Proton donor of the active site.

The protein belongs to the glycosyl hydrolase 11 (cellulase G) family.

The protein resides in the secreted. The enzyme catalyses Endohydrolysis of (1-&gt;4)-beta-D-xylosidic linkages in xylans.. It participates in glycan degradation; xylan degradation. In terms of biological role, endo-1,4-beta-xylanase involved in the hydrolysis of xylan, a major structural heterogeneous polysaccharide found in plant biomass representing the second most abundant polysaccharide in the biosphere, after cellulose. In Pyricularia grisea (Crabgrass-specific blast fungus), this protein is Endo-1,4-beta-xylanase 4 (XYL4).